A 71-amino-acid polypeptide reads, in one-letter code: Small ribosomal subunit protein bS21 (71 aa).

It belongs to the bacterial ribosomal protein bS21 family.

In Shewanella piezotolerans (strain WP3 / JCM 13877), this protein is Small ribosomal subunit protein bS21.